Consider the following 345-residue polypeptide: Selenide, water dikinase (345 aa).

C15 is a catalytic residue. ATP-binding positions include K18 and 46 to 48; that span reads SKD. Mg(2+) is bound at residue D49. Residues D66, D89, and 137 to 139 contribute to the ATP site; that span reads GHS. A Mg(2+)-binding site is contributed by D89. A Mg(2+)-binding site is contributed by D225.

Belongs to the selenophosphate synthase 1 family. Class I subfamily. Homodimer. Mg(2+) is required as a cofactor.

The enzyme catalyses hydrogenselenide + ATP + H2O = selenophosphate + AMP + phosphate + 2 H(+). In terms of biological role, synthesizes selenophosphate from selenide and ATP. The polypeptide is Selenide, water dikinase (Aeromonas hydrophila subsp. hydrophila (strain ATCC 7966 / DSM 30187 / BCRC 13018 / CCUG 14551 / JCM 1027 / KCTC 2358 / NCIMB 9240 / NCTC 8049)).